The following is a 144-amino-acid chain: uncharacterized protein (144 aa).

N14 and N15 each carry an N-linked (GlcNAc...) asparagine glycan. A helical membrane pass occupies residues 90 to 110 (FSWFIFGLFIACLLLCITLVL). The segment at 120 to 144 (NKATEVVPSSNIDDEEKQLSLSDMI) is disordered.

The protein localises to the membrane. This is an uncharacterized protein from Saccharomyces cerevisiae (strain ATCC 204508 / S288c) (Baker's yeast).